Consider the following 20-residue polypeptide: 35 kDa cell wall protein (20 aa).

It is found in the secreted. Its subcellular location is the cell wall. In Phaseolus vulgaris (Kidney bean), this protein is 35 kDa cell wall protein.